The sequence spans 1035 residues: Retinoblastoma-related protein (1035 aa).

A disordered region spans residues 403-426; it reads ITSPLSPHRSPASHANGIPGSANS. Residues 431–632 are domain A; the sequence is TPVSTAMTTA…EKGSSLYNSL (202 aa). The interval 431–885 is pocket; that stretch reads TPVSTAMTTA…NEIFIPAAKP (455 aa). Residues 633-753 form a spacer region; the sequence is TVARPALSAE…PGGGGETCAE (121 aa). 2 disordered regions span residues 674 to 697 and 721 to 748; these read PSLQ…PKRP and GNLK…GGGG. The domain B stretch occupies residues 754-885; sequence TGINVFFTKI…NEIFIPAAKP (132 aa).

This sequence belongs to the retinoblastoma protein (RB) family.

Its subcellular location is the nucleus. Its function is as follows. Regulator of biological processes that recruits a histone deacetylase to control gene transcription. May play a role in the entry into mitosis, negatively regulating the cell proliferation. Formation of stable complexes with geminiviridae replication-associated proteins may create a cellular environment which favors viral DNA replication. In Populus trichocarpa (Western balsam poplar), this protein is Retinoblastoma-related protein (RBL901).